Reading from the N-terminus, the 65-residue chain is MKEKTHPKYEQTTITCVCGEVIPTGSTKKDIKVEICSKCHPFYTGVQRFVDAGGRVDRFKKKYGM.

Residues Cys16, Cys18, Cys36, and Cys39 each coordinate Zn(2+).

The protein belongs to the bacterial ribosomal protein bL31 family. Type A subfamily. Part of the 50S ribosomal subunit. Zn(2+) is required as a cofactor.

In terms of biological role, binds the 23S rRNA. This Desulfitobacterium hafniense (strain DSM 10664 / DCB-2) protein is Large ribosomal subunit protein bL31.